A 2210-amino-acid chain; its full sequence is RNA-directed RNA polymerase L (2210 aa).

Residues 26–284 (KDAFLSHCHS…KHEDNTTSDC (259 aa)) are endonuclease. Residues Glu-51, Asp-89, and Glu-102 each coordinate Mn(2+). Lys-115 is a catalytic residue. Residues 1172–1368 (CDMKLAVNNG…YLSSKLNKFV (197 aa)) enclose the RdRp catalytic domain. Position 1330 (Asp-1330) interacts with Mg(2+).

Belongs to the Bunyavirales RNA polymerase family. In terms of assembly, homomultimer; the oligomeric structure is essential for the polymerase activity. Interacts with nucleoprotein N. Interacts with protein Z; this interaction inhibits viral transcription and replication, Z partially blocks the product exit tunnel for the releasing nascent RNA product. Mn(2+) serves as cofactor. Requires Mg(2+) as cofactor.

The protein resides in the virion. It localises to the host cytoplasm. The enzyme catalyses RNA(n) + a ribonucleoside 5'-triphosphate = RNA(n+1) + diphosphate. RNA-dependent RNA polymerase, which is responsible for the replication and transcription of the viral RNA genome using antigenomic RNA as an intermediate. During transcription, synthesizes subgenomic RNAs and assures their capping by a cap-snatching mechanism, which involves the endonuclease activity cleaving the host capped pre-mRNAs. These short capped RNAs are then used as primers for viral transcription. The 3'-end of subgenomic mRNAs molecules are heterogeneous and not polyadenylated. The replicase function is to direct synthesis of antigenomic and genomic RNA which are encapsidated and non capped. As a consequence of the use of the same enzyme for both transcription and replication, these mechanisms need to be well coordinated. These processes may be regulated by proteins N and Z in a dose-dependent manner. Z protein inhibits the viral polymerase L und thus the viral transcription and RNA synthesis. This is RNA-directed RNA polymerase L from Tacaribe virus (strain Franze-Fernandez) (TCRV).